We begin with the raw amino-acid sequence, 843 residues long: Protein P (843 aa).

A terminal protein domain (TP) region spans residues 1–177 (MPLSYQHFRR…FCGSPYSWEQ (177 aa)). The tract at residues 178-346 (ELQHGSTSLN…YCLSHIINLL (169 aa)) is spacer. Positions 228–316 (KQGQLANGKQ…VPPSTVGSES (89 aa)) are disordered. 3 stretches are compositionally biased toward polar residues: residues 262-276 (TGHS…TSRF), 286-299 (NPSL…TSTG), and 307-316 (VPPSTVGSES). Residues 347–690 (EDWGPCYEHG…YMNLYPVARQ (344 aa)) are polymerase/reverse transcriptase domain (RT). Residues 357–600 (EHHIRTPRTP…YSLHFMGYII (244 aa)) form the Reverse transcriptase domain. Aspartate 429, aspartate 551, and aspartate 552 together coordinate Mg(2+).

The protein belongs to the hepadnaviridae P protein family.

It catalyses the reaction DNA(n) + a 2'-deoxyribonucleoside 5'-triphosphate = DNA(n+1) + diphosphate. It carries out the reaction Endonucleolytic cleavage to 5'-phosphomonoester.. Activated by host HSP70 and HSP40 in vitro to be able to bind the epsilon loop of the pgRNA. Because deletion of the RNase H region renders the protein partly chaperone-independent, the chaperones may be needed indirectly to relieve occlusion of the RNA-binding site by this domain. Inhibited by several reverse-transcriptase inhibitors: Lamivudine, Adefovir and Entecavir. Multifunctional enzyme that converts the viral RNA genome into dsDNA in viral cytoplasmic capsids. This enzyme displays a DNA polymerase activity that can copy either DNA or RNA templates, and a ribonuclease H (RNase H) activity that cleaves the RNA strand of RNA-DNA heteroduplexes in a partially processive 3'- to 5'-endonucleasic mode. Neo-synthesized pregenomic RNA (pgRNA) are encapsidated together with the P protein, and reverse-transcribed inside the nucleocapsid. Initiation of reverse-transcription occurs first by binding the epsilon loop on the pgRNA genome, and is initiated by protein priming, thereby the 5'-end of (-)DNA is covalently linked to P protein. Partial (+)DNA is synthesized from the (-)DNA template and generates the relaxed circular DNA (RC-DNA) genome. After budding and infection, the RC-DNA migrates in the nucleus, and is converted into a plasmid-like covalently closed circular DNA (cccDNA). The activity of P protein does not seem to be necessary for cccDNA generation, and is presumably released from (+)DNA by host nuclear DNA repair machinery. This is Protein P from Homo sapiens (Human).